We begin with the raw amino-acid sequence, 194 residues long: Peptidyl-tRNA hydrolase (194 aa).

Tyrosine 17 contacts tRNA. Histidine 22 (proton acceptor) is an active-site residue. Tyrosine 68, asparagine 70, and asparagine 116 together coordinate tRNA.

The protein belongs to the PTH family. Monomer.

The protein resides in the cytoplasm. It carries out the reaction an N-acyl-L-alpha-aminoacyl-tRNA + H2O = an N-acyl-L-amino acid + a tRNA + H(+). Functionally, hydrolyzes ribosome-free peptidyl-tRNAs (with 1 or more amino acids incorporated), which drop off the ribosome during protein synthesis, or as a result of ribosome stalling. Catalyzes the release of premature peptidyl moieties from peptidyl-tRNA molecules trapped in stalled 50S ribosomal subunits, and thus maintains levels of free tRNAs and 50S ribosomes. This Pseudomonas putida (strain ATCC 700007 / DSM 6899 / JCM 31910 / BCRC 17059 / LMG 24140 / F1) protein is Peptidyl-tRNA hydrolase.